The sequence spans 163 residues: Putative phosphinothricin acetyltransferase YwnH (163 aa).

The region spanning 1 to 158 (MTLRLAEHRD…DGKRYDLKIL (158 aa)) is the N-acetyltransferase domain. Residues 85–87 (IYI), 94–98 (KGVGS), and 124–126 (NKP) contribute to the acetyl-CoA site.

The protein belongs to the acetyltransferase family. PAT/BAR subfamily.

The enzyme catalyses phosphinothricin + acetyl-CoA = N-acetylphosphinothricin + CoA + H(+). Its function is as follows. This enzyme is an effector of phosphinothricin tripeptide (PTT or bialaphos) resistance. Inactivates PTT by transfer of an acetyl group. This is Putative phosphinothricin acetyltransferase YwnH (ywnH) from Bacillus subtilis (strain 168).